The sequence spans 470 residues: Sulfate adenylyltransferase subunit 1 (470 aa).

One can recognise a tr-type G domain in the interval 22–238 (KELLRFITCG…ETIKIDYAYT (217 aa)). The tract at residues 31–38 (GSVDDGKS) is G1. Residue 31–38 (GSVDDGKS) participates in GTP binding. The segment at 89 to 93 (GITID) is G2. The interval 110–113 (DTPG) is G3. GTP contacts are provided by residues 110 to 114 (DTPGH) and 165 to 168 (NKMD). A G4 region spans residues 165 to 168 (NKMD). Positions 202 to 204 (SAL) are G5.

This sequence belongs to the TRAFAC class translation factor GTPase superfamily. Classic translation factor GTPase family. CysN/NodQ subfamily. Heterodimer composed of CysD, the smaller subunit, and CysN.

It carries out the reaction sulfate + ATP + H(+) = adenosine 5'-phosphosulfate + diphosphate. The protein operates within sulfur metabolism; hydrogen sulfide biosynthesis; sulfite from sulfate: step 1/3. With CysD forms the ATP sulfurylase (ATPS) that catalyzes the adenylation of sulfate producing adenosine 5'-phosphosulfate (APS) and diphosphate, the first enzymatic step in sulfur assimilation pathway. APS synthesis involves the formation of a high-energy phosphoric-sulfuric acid anhydride bond driven by GTP hydrolysis by CysN coupled to ATP hydrolysis by CysD. This chain is Sulfate adenylyltransferase subunit 1, found in Francisella tularensis subsp. tularensis (strain SCHU S4 / Schu 4).